The sequence spans 816 residues: MLLWSAVRGLSPPRIVPSLLVVVALAGLLPGLRSHGLQLSPTDSTTPDSQPSRERSIGDVTTAPPEVTPESRPVNRSVTEHGMKPRKAFPVLGIDYTHVRTPFEISLWILLACLMKIGFHVIPTISSIVPESCLLIVVGLLVGGLIKGVGEKPPFLQSEVFFLFLLPPIILDAGYFLPLRQFTENLGTILIFAVVGTLWNAFFLGGLMYAVCLVGGEQINNIGLLDNLLFGSIISAVDPVAVLAVFEEIHINELLHILVFGESLLNDAVTVVLYHLFEEFANYDHVGIVDIVLGFLSFFVVALGGVFVGVVYGVIAAFTSRFTAHIRVIEPLFVFLYSYMAYLSAELFHLSGIMALIASGVVMRPYVEANISHKSHTTIKYFLKMWSSVSETLIFIFLGVSTVAGSHHWNWTFVISTLLFCLIARVLGVLGLTWFINKFRIVKLTPKDQFIIAYGGLRGAIAFSLGYLLDKKHFPMCDLFLTAIITVIFFTVFVQGMTIRPLVDLLAVKKKQETKRSINEEIHTQFLDHLLTGIEDICGHYGHHHWKDKLNRFNKKYVKKCLIAGERSKEPQLIAFYHKMEMKQAIELVESGGMGKIPSAVSTVSMQNIHPKALPAERILPALSKDKEEEIRKILRNNLQKTRQRLRSYNRHTLVADPYEEAWNQMLLRRQKARQLEQKINNYLTVPAHKLDSPTMSRARIGSDPLAYEPKADLPVITIDPASPQSPESVDLVNEELKGKVLGLSREPRVAEEAAEEDEDGGIVMRPKEPSSPGTDDVFSPAPSDSPSSQRMQRCLSDPGPHPEPGEGEPFIPKGQ.

Residues 1 to 98 (MLLWSAVRGL…FPVLGIDYTH (98 aa)) lie on the Extracellular side of the membrane. Positions 37 to 50 (LQLSPTDSTTPDSQ) are enriched in polar residues. A disordered region spans residues 37–79 (LQLSPTDSTTPDSQPSRERSIGDVTTAPPEVTPESRPVNRSVT). An N-linked (GlcNAc...) asparagine glycan is attached at asparagine 75. Residues 99 to 121 (VRTPFEISLWILLACLMKIGFHV) traverse the membrane as a helical segment. Residues 122-130 (IPTISSIVP) are Cytoplasmic-facing. Residues 131–148 (ESCLLIVVGLLVGGLIKG) form a helical membrane-spanning segment. The Extracellular segment spans residues 149–158 (VGEKPPFLQS). A helical transmembrane segment spans residues 159-176 (EVFFLFLLPPIILDAGYF). At 177 to 186 (LPLRQFTENL) the chain is on the cytoplasmic side. A helical transmembrane segment spans residues 187-215 (GTILIFAVVGTLWNAFFLGGLMYAVCLVG). Topologically, residues 216-222 (GEQINNI) are extracellular. Residues 223–249 (GLLDNLLFGSIISAVDPVAVLAVFEEI) form a helical membrane-spanning segment. The Cytoplasmic portion of the chain corresponds to 250–252 (HIN). A helical membrane pass occupies residues 253–283 (ELLHILVFGESLLNDAVTVVLYHLFEEFANY). The Extracellular segment spans residues 284 to 287 (DHVG). A helical transmembrane segment spans residues 288–322 (IVDIVLGFLSFFVVALGGVFVGVVYGVIAAFTSRF). Residues 323 to 328 (TAHIRV) are Cytoplasmic-facing. The helical transmembrane segment at 329 to 341 (IEPLFVFLYSYMA) threads the bilayer. Topologically, residues 342–350 (YLSAELFHL) are extracellular. Residues 351-371 (SGIMALIASGVVMRPYVEANI) traverse the membrane as a helical segment. At 372–373 (SH) the chain is on the cytoplasmic side. Residues 374–404 (KSHTTIKYFLKMWSSVSETLIFIFLGVSTVA) form a helical membrane-spanning segment. Topologically, residues 405–410 (GSHHWN) are extracellular. Residues 411-438 (WTFVISTLLFCLIARVLGVLGLTWFINK) form a helical membrane-spanning segment. Over 439–444 (FRIVKL) the chain is Cytoplasmic. A helical membrane pass occupies residues 445-469 (TPKDQFIIAYGGLRGAIAFSLGYLL). Residues 470–475 (DKKHFP) are Extracellular-facing. Residues 476–505 (MCDLFLTAIITVIFFTVFVQGMTIRPLVDL) form a helical membrane-spanning segment. Positions 503 to 545 (VDLLAVKKKQETKRSINEEIHTQFLDHLLTGIEDICGHYGHHH) are interaction with TESC. Topologically, residues 506 to 816 (LAVKKKQETK…EGEPFIPKGQ (311 aa)) are cytoplasmic. The segment at 509–516 (KKKQETKR) is PI(4,5)P2-binding region. The segment at 515–545 (KRSINEEIHTQFLDHLLTGIEDICGHYGHHH) is interaction with CHP2. The tract at residues 540–545 (HYGHHH) is confers pH-dependent PI(4,5)P2 binding. Residues 552 to 560 (RFNKKYVKK) form a PI(4,5)P2-binding region region. Serine 599 and serine 602 each carry phosphoserine. The residue at position 603 (threonine 603) is a Phosphothreonine. Phosphoserine occurs at positions 605 and 648. Residues 633-816 (KILRNNLQKT…EGEPFIPKGQ (184 aa)) form an interaction with TESC region. Positions 633-816 (KILRNNLQKT…EGEPFIPKGQ (184 aa)) are interaction with CALM1. The segment at 684 to 687 (LTVP) is interaction with PPP3CA. A phosphoserine mark is found at serine 693, serine 697, and serine 703. The interval 715–720 (PVITID) is interaction with PPP3CA. 6 positions are modified to phosphoserine: serine 723, serine 726, serine 729, serine 786, serine 788, and serine 797. Residues 748–816 (PRVAEEAAEE…EGEPFIPKGQ (69 aa)) are disordered. Polar residues predominate over residues 783–792 (PSDSPSSQRM).

Belongs to the monovalent cation:proton antiporter 1 (CPA1) transporter (TC 2.A.36) family. As to quaternary structure, homodimer; dimerization is crucial for its function. Oligomer. Interacts with CALM in a calcium-dependent manner. Interacts with TESC. Interacts (via the juxtamembrane region of the cytoplasmic C-terminal domain) with CHP1; the interaction occurs at the plasma membrane in a calcium-dependent manner. Interacts with CHP2; the interaction occurs in a calcium-dependent manner. Interacts with EZR; regulates the cytoskeletal interactions of SLC9A1 and promotes stress fiber formation. In terms of processing, ubiquitinated, leading to its degradation by the proteasome. Ubiquitination is reduced by CHP1. O-glycosylated. Post-translationally, palmitoylated; may play a major role in SLC9A1 regulation. In terms of processing, phosphorylation at Ser-648 by AKT1 reduces SLC9A1 binding to CALM1. Kidney and intestine.

It is found in the cell membrane. The protein resides in the basolateral cell membrane. It catalyses the reaction Na(+)(in) + H(+)(out) = Na(+)(out) + H(+)(in). The enzyme catalyses Li(+)(out) + H(+)(in) = Li(+)(in) + H(+)(out). It carries out the reaction Li(+)(in) + Na(+)(out) = Li(+)(out) + Na(+)(in). Activated at acidic pHs. Inhibited by cariporide and eniporide. Phosphatidylinositol 4,5-bisphosphate (PI(4,5)P2) and phosphatidylinositol 3,4,5-trisphosphate (PI(3,4,5)P3) bind and differentially regulate SLC9A1 activity. Its function is as follows. Electroneutral Na(+) /H(+) antiporter that extrudes Na(+) in exchange for external protons driven by the inward sodium ion chemical gradient, protecting cells from acidification that occurs from metabolism. Exchanges intracellular H(+) ions for extracellular Na(+) in 1:1 stoichiometry. Plays a key role in maintening intracellular pH neutral and cell volume, and thus is important for cell growth, proliferation, migration and survival. In addition, can transport lithium Li(+) and functions also as a Na(+)/Li(+) antiporter. SLC9A1 also functions in membrane anchoring and organization of scaffolding complexes that coordinate signaling inputs. This chain is Sodium/hydrogen exchanger 1 (SLC9A1), found in Oryctolagus cuniculus (Rabbit).